We begin with the raw amino-acid sequence, 385 residues long: Cytochrome b (385 aa).

Transmembrane regions (helical) follow at residues 32 to 52 (FGSL…TLAM), 76 to 98 (WLVR…LHIG), 113 to 133 (TWAI…LGYV), and 179 to 199 (FFAL…MHLI). Heme b-binding residues include His82 and His96. Heme b is bound by residues His183 and His197. His202 is an a ubiquinone binding site. Transmembrane regions (helical) follow at residues 226-246 (FVFK…IFVF), 290-310 (LLGV…PITD), 322-342 (LSKV…QIGA), and 349-369 (FIEF…VIVP).

It belongs to the cytochrome b family. As to quaternary structure, fungal cytochrome b-c1 complex contains 10 subunits; 3 respiratory subunits, 2 core proteins and 5 low-molecular weight proteins. Cytochrome b-c1 complex is a homodimer. The cofactor is heme b.

The protein localises to the mitochondrion inner membrane. Functionally, component of the ubiquinol-cytochrome c reductase complex (complex III or cytochrome b-c1 complex) that is part of the mitochondrial respiratory chain. The b-c1 complex mediates electron transfer from ubiquinol to cytochrome c. Contributes to the generation of a proton gradient across the mitochondrial membrane that is then used for ATP synthesis. This Aspergillus terreus (strain NIH 2624 / FGSC A1156) protein is Cytochrome b (cob).